The sequence spans 752 residues: Complement C2 (752 aa).

The N-terminal stretch at 1 to 20 (MGPLMVLFCLLFLYPGLADS) is a signal peptide. Sushi domains are found at residues 22 to 86 (PSCP…VCKP), 87 to 146 (VRCP…VCDN), and 149 to 206 (GHCP…ICRQ). 6 disulfides stabilise this stretch: Cys-24-Cys-64, Cys-51-Cys-84, Cys-89-Cys-131, Cys-117-Cys-144, Cys-151-Cys-191, and Cys-177-Cys-204. N-linked (GlcNAc...) asparagine glycosylation occurs at Asn-29. Asn-112 carries N-linked (GlcNAc...) asparagine glycosylation. The 199-residue stretch at 254–452 (NLYLLLDCSQ…KALHQVFEHM (199 aa)) folds into the VWFA domain. The MIDAS-like motif signature appears at 260–264 (DCSQS). Mg(2+)-binding residues include Ser-262 and Ser-264. Residues Asn-290 and Asn-333 are each glycosylated (N-linked (GlcNAc...) asparagine). Thr-337 is a Mg(2+) binding site. 3 disulfides stabilise this stretch: Cys-463/Cys-581, Cys-492/Cys-508, and Cys-584/Cys-600. The region spanning 464–744 (GVGNMSANAS…MQPWLRQHLG (281 aa)) is the Peptidase S1 domain. N-linked (GlcNAc...) asparagine glycans are attached at residues Asn-467 and Asn-471. Catalysis depends on charge relay system residues His-507 and Asp-561. Asn-621 and Asn-651 each carry an N-linked (GlcNAc...) asparagine glycan. Cystine bridges form between Cys-638–Cys-665 and Cys-675–Cys-705. Ser-679 serves as the catalytic Charge relay system.

It belongs to the peptidase S1 family. In terms of assembly, serine protease component of the C3 convertase, also named C4bC2b, composed of the serine protease complement C2b and complement C4b. Serine protease component of the C5 convertase, also named C4bC2bC3b, composed of the serine protease complement C2b, complement C3b, as well as complement C4b. Mg(2+) is required as a cofactor. Requires Mn(2+) as cofactor. Cleaved and activated by different proteases depending on the complement pathway to generate complement C2a and serine protease complement C2b chains. Cleaved and activated by C1S following activation by the classical complement system. Cleaved and activated by MASP2 following activation by the lectin complement system. Cleaved and activated by GZMK following activation by the GZMK complement system.

The protein resides in the secreted. Its subcellular location is the cell surface. It carries out the reaction Selective cleavage of Arg-|-Ser bond in complement component C3 alpha-chain to form C3a and C3b, and Arg-|-Xaa bond in complement component C5 alpha-chain to form C5a and C5b.. In terms of biological role, precursor of the catalytic component of the C3 and C5 convertase complexes, which are part of the complement pathway, a cascade of proteins that leads to phagocytosis and breakdown of pathogens and signaling that strengthens the adaptive immune system. Component C2 is part of the classical, lectin and GZMK complement systems. Its function is as follows. Catalytic component of the complement C3 and C5 convertase complexes. Following complement activation, recruited to the surface of pathogens by complement C4b opsonin to form the C3 convertase, or C3b and C4b opsonins to form the C5 convertase. As part of the C3 convertase, cleaves and activate C3 into C3a anaphylatoxin and C3b opsonin, the next components of the complement pathways. As part of the C5 convertase, cleaves and activate C5 into C5a anaphylatoxin and C5b component of the membrane attack complex. This chain is Complement C2, found in Pan troglodytes (Chimpanzee).